Here is a 602-residue protein sequence, read N- to C-terminus: Cholinesterase (602 aa).

An N-terminal signal peptide occupies residues Met1–Thr28. A glycan (N-linked (GlcNAc...) asparagine) is linked at Asn85. A disulfide bond links Cys93 and Cys120. Asn134 carries N-linked (GlcNAc...) asparagine glycosylation. Gly144 to Gly145 is a substrate binding site. The active-site Acyl-ester intermediate is Ser226. The residue at position 226 (Ser226) is a Phosphoserine. 2 N-linked (GlcNAc...) asparagine glycosylation sites follow: Asn269 and Asn284. Cys280 and Cys291 are disulfide-bonded. Residue Glu353 is the Charge relay system of the active site. Residue Asn369 is glycosylated (N-linked (GlcNAc...) asparagine). A disulfide bridge links Cys428 with Cys547. Catalysis depends on His466, which acts as the Charge relay system. N-linked (GlcNAc...) asparagine glycosylation is found at Asn483, Asn509, Asn513, and Asn514.

The protein belongs to the type-B carboxylesterase/lipase family. Homotetramer; disulfide-linked. Dimer of dimers.

The protein resides in the secreted. The enzyme catalyses an acylcholine + H2O = a carboxylate + choline + H(+). Functionally, esterase with broad substrate specificity. Contributes to the inactivation of the neurotransmitter acetylcholine. Can degrade neurotoxic organophosphate esters. In Felis catus (Cat), this protein is Cholinesterase (BCHE).